The following is a 379-amino-acid chain: Tubby-like F-box protein 7 (379 aa).

Polar residues predominate over residues 18–28 (FHQGETTTAPE). The disordered stretch occupies residues 18-41 (FHQGETTTAPESESIPPPSNMAGS). The 56-residue stretch at 42 to 97 (SSWSAMLPELLGEIIRRVEETEDRWPQRRDVVTCACVSKKWREITHDFARSSLNSG) folds into the F-box domain. Disordered regions lie at residues 193–212 (SQPPHNGAKPSNGKASRRFA) and 248–278 (TLRCPSPSPSSSSAGLSSDQKPCDVTKIMKK).

It belongs to the TUB family. As to expression, ubiquitous.

This chain is Tubby-like F-box protein 7, found in Arabidopsis thaliana (Mouse-ear cress).